The chain runs to 391 residues: Oocyte zinc finger protein XlCOF7.2 (391 aa).

4 consecutive C2H2-type zinc fingers follow at residues 284–306 (FPCS…YRTH), 312–334 (YPCS…RRIH), 340–362 (SSCS…HRTH), and 368–391 (YSCS…RRTH).

It belongs to the krueppel C2H2-type zinc-finger protein family.

It localises to the nucleus. Functionally, may be involved in transcriptional regulation. This is Oocyte zinc finger protein XlCOF7.2 from Xenopus laevis (African clawed frog).